The sequence spans 708 residues: ATP-dependent RNA helicase laf-1 (708 aa).

A compositionally biased stretch (low complexity) spans 1–21 (MESNQSNNGGSGNAALNRGGR). The tract at residues 1 to 191 (MESNQSNNGG…RGTSKWENRG (191 aa)) is disordered. Gly residues predominate over residues 48–70 (GAGGGGYRRGGGNSGGGGGGGYD). Basic and acidic residues-rich tracts occupy residues 72-83 (GYNDNRDDRDNR) and 90-99 (GRDRNYEDRG). Residues 100–123 (YNGGGGGGGNRGYNNNRGGGGGGY) show a composition bias toward gly residues. A Q motif motif is present at residues 231 to 259 (SLFSDLSLHEWIEENIKTAGYDRPTPVQK). The region spanning 262–453 (IPALQGGRDL…QDFLKENYVF (192 aa)) is the Helicase ATP-binding domain. An ATP-binding site is contributed by 275-282 (AQTGSGKT). Positions 397-400 (DEAD) match the DEAD box motif. The region spanning 465-626 (NIMQKIVWVE…ELPDWLEGMS (162 aa)) is the Helicase C-terminal domain. The interval 623-708 (EGMSGDMRSG…RAQPQQDWWS (86 aa)) is disordered. 2 stretches are compositionally biased toward gly residues: residues 630–647 (RSGG…GQRF) and 656–692 (GGSG…GGGR). Over residues 699–708 (RAQPQQDWWS) the composition is skewed to polar residues.

Belongs to the DEAD box helicase family. DDX3/DED1 subfamily. As to quaternary structure, binds RNA as a monomer at low laf-1 concentrations and as a dimer at high laf-1 concentrations. Expressed in the germline and soma of young adult hermaphrodites.

The protein resides in the cytoplasm. The protein localises to the cytoplasmic granule. It is found in the nucleus. It localises to the stress granule. Its subcellular location is the inflammasome. The protein resides in the cell membrane. The protein localises to the cell projection. It is found in the lamellipodium. It catalyses the reaction ATP + H2O = ADP + phosphate + H(+). Functionally, multifunctional ATP-dependent RNA helicase. Plays a role in RNA remodeling, but is not required for RNA unwinding. Binds to RNA in a concentration-dependent manner to stimulate annealing between two complementary strands of RNA. This process is also dependent upon ATP; ATP reduces binding to RNA and subsequently diminishes RNA annealing. Involved in many cellular processes, which do not necessarily require its ATPase/helicase catalytic activities. Involved in the regulation of transcription and translation initiation. Involved in innate immunity. Involved in both stress and inflammatory responses. Promotes liquid-liquid phase separation of P granules, which is a process important for intracellular organization and stress granule assembly. Required for embryonic development. Plays a role in sexual cell fate determination by negatively regulating the translation of the sex determining protein tra-2. May play a protective role in the response to heat and oxidative stress. May negatively regulate extrinsic apoptotic signaling pathway via death domain receptors. May be involved in mitotic chromosome segregation. The chain is ATP-dependent RNA helicase laf-1 from Caenorhabditis elegans.